Consider the following 190-residue polypeptide: Potassium-transporting ATPase KdpC subunit (190 aa).

Residues 11–31 (LIVLMSLITGVAYPLVVTGVA) traverse the membrane as a helical segment.

Belongs to the KdpC family. In terms of assembly, the system is composed of three essential subunits: KdpA, KdpB and KdpC.

It localises to the cell inner membrane. Part of the high-affinity ATP-driven potassium transport (or Kdp) system, which catalyzes the hydrolysis of ATP coupled with the electrogenic transport of potassium into the cytoplasm. This subunit acts as a catalytic chaperone that increases the ATP-binding affinity of the ATP-hydrolyzing subunit KdpB by the formation of a transient KdpB/KdpC/ATP ternary complex. In Pseudomonas savastanoi pv. phaseolicola (strain 1448A / Race 6) (Pseudomonas syringae pv. phaseolicola (strain 1448A / Race 6)), this protein is Potassium-transporting ATPase KdpC subunit.